Consider the following 87-residue polypeptide: Phosphoribosyl-ATP pyrophosphatase (87 aa).

Belongs to the PRA-PH family.

It localises to the cytoplasm. It carries out the reaction 1-(5-phospho-beta-D-ribosyl)-ATP + H2O = 1-(5-phospho-beta-D-ribosyl)-5'-AMP + diphosphate + H(+). The protein operates within amino-acid biosynthesis; L-histidine biosynthesis; L-histidine from 5-phospho-alpha-D-ribose 1-diphosphate: step 2/9. This Bifidobacterium animalis subsp. lactis (strain AD011) protein is Phosphoribosyl-ATP pyrophosphatase.